We begin with the raw amino-acid sequence, 251 residues long: Triosephosphate isomerase (251 aa).

9 to 11 (NWK) contributes to the substrate binding site. The Electrophile role is filled by histidine 94. Glutamate 166 functions as the Proton acceptor in the catalytic mechanism. Substrate contacts are provided by residues glycine 172, serine 211, and 232-233 (GG).

It belongs to the triosephosphate isomerase family. Homodimer.

Its subcellular location is the cytoplasm. It catalyses the reaction D-glyceraldehyde 3-phosphate = dihydroxyacetone phosphate. Its pathway is carbohydrate biosynthesis; gluconeogenesis. It participates in carbohydrate degradation; glycolysis; D-glyceraldehyde 3-phosphate from glycerone phosphate: step 1/1. In terms of biological role, involved in the gluconeogenesis. Catalyzes stereospecifically the conversion of dihydroxyacetone phosphate (DHAP) to D-glyceraldehyde-3-phosphate (G3P). The chain is Triosephosphate isomerase from Stenotrophomonas maltophilia (strain K279a).